Consider the following 249-residue polypeptide: MHTLVLLRHGQSAWNLENRFTGWTDVDLSPEGEQEARDAARLLTDEGLTFDVCHTSVLTRAIRTLYIVQHEMGLSWLPVHKHWRLNERHYGGLQGLDKAETAARFGEEQVFEWRRSYDTPPPPLPADDPRSPAGDARYAGLAPDVLPASESLKETVARVLPYWHDVIAPQVLAGQRVLVAAHGNSLRALVMHLDGMTPEAVTKLNIPTGLPLVYTLDGTLRPLAHRYLGDPAVAEAKAKAVAAQGAARK.

Substrate-binding positions include 8 to 15 (RHGQSAWN), 21 to 22 (TG), R60, 87 to 90 (ERHY), K98, 114 to 115 (RR), and 183 to 184 (GN). Residue H9 is the Tele-phosphohistidine intermediate of the active site. Catalysis depends on E87, which acts as the Proton donor/acceptor. The segment at 115–137 (RSYDTPPPPLPADDPRSPAGDAR) is disordered.

Belongs to the phosphoglycerate mutase family. BPG-dependent PGAM subfamily. As to quaternary structure, homodimer.

It catalyses the reaction (2R)-2-phosphoglycerate = (2R)-3-phosphoglycerate. The protein operates within carbohydrate degradation; glycolysis; pyruvate from D-glyceraldehyde 3-phosphate: step 3/5. Its function is as follows. Catalyzes the interconversion of 2-phosphoglycerate and 3-phosphoglycerate. This is 2,3-bisphosphoglycerate-dependent phosphoglycerate mutase from Nitratidesulfovibrio vulgaris (strain DSM 19637 / Miyazaki F) (Desulfovibrio vulgaris).